Consider the following 796-residue polypeptide: Disintegrin and metalloproteinase domain-containing protein B (796 aa).

Residues 1 to 23 (MKALSCLLAVIATAGSLFQHVDA) form the signal peptide. The Extracellular segment spans residues 24–706 (RSHARDRLNN…VSDWVSRHKP (683 aa)). Residues Asn33, Asn226, Asn313, and Asn407 are each glycosylated (N-linked (GlcNAc...) asparagine). Residues 271 to 510 (RVALIGVVAD…HSILTNCLTT (240 aa)) form the Peptidase M12B domain. Intrachain disulfides connect Cys395/Cys495, Cys448/Cys459, and Cys580/Cys600. His431 contributes to the Zn(2+) binding site. The active site involves Glu432. 2 residues coordinate Zn(2+): His435 and His441. A Disintegrin domain is found at 519–608 (GQQCGNGIVE…DCPRDTHSKN (90 aa)). The chain crosses the membrane as a helical span at residues 707–727 (IVIGVAVGVGCLLLLAILSCI). The Cytoplasmic segment spans residues 728–796 (CGRSKKRRPR…PGRMPSTRYA (69 aa)). The interval 737–796 (RNRKMAPINMRPMPPVYNGWTGPPPNAESPGGHPQYNHVPPPINAPPPAYPGRMPSTRYA) is disordered. Over residues 775 to 786 (VPPPINAPPPAY) the composition is skewed to pro residues.

Zn(2+) serves as cofactor.

The protein resides in the membrane. Its function is as follows. Probable zinc protease. The chain is Disintegrin and metalloproteinase domain-containing protein B (ADM-B) from Arthroderma otae (strain ATCC MYA-4605 / CBS 113480) (Microsporum canis).